Here is a 580-residue protein sequence, read N- to C-terminus: Arginine--tRNA ligase (580 aa).

A 'HIGH' region motif is present at residues 131 to 141 (ANPTGPMHVGH).

It belongs to the class-I aminoacyl-tRNA synthetase family. In terms of assembly, monomer.

The protein resides in the cytoplasm. It catalyses the reaction tRNA(Arg) + L-arginine + ATP = L-arginyl-tRNA(Arg) + AMP + diphosphate. The polypeptide is Arginine--tRNA ligase (Cereibacter sphaeroides (strain ATCC 17029 / ATH 2.4.9) (Rhodobacter sphaeroides)).